The primary structure comprises 385 residues: Homoserine O-succinyltransferase (385 aa).

The region spanning 45 to 355 (NAVLVCHALN…SHGHDAFLLD (311 aa)) is the AB hydrolase-1 domain. Catalysis depends on Ser151, which acts as the Nucleophile. Arg221 contacts substrate. Active-site residues include Asp316 and His349. A substrate-binding site is contributed by Asp350.

This sequence belongs to the AB hydrolase superfamily. MetX family. As to quaternary structure, homodimer.

It localises to the cytoplasm. It carries out the reaction L-homoserine + succinyl-CoA = O-succinyl-L-homoserine + CoA. The protein operates within amino-acid biosynthesis; L-methionine biosynthesis via de novo pathway; O-succinyl-L-homoserine from L-homoserine: step 1/1. Functionally, transfers a succinyl group from succinyl-CoA to L-homoserine, forming succinyl-L-homoserine. The polypeptide is Homoserine O-succinyltransferase (Herminiimonas arsenicoxydans).